The primary structure comprises 293 residues: 4-hydroxybenzoate octaprenyltransferase (293 aa).

The next 7 membrane-spanning stretches (helical) occupy residues 25–45, 48–68, 101–121, 142–162, 165–185, 223–243, and 271–291; these read IGNF…AKGL, LKVL…GCVI, LFVV…PLTI, HFPQ…AFAA, GAVA…ATIY, VMLA…FWYL, and FLNN…DLHL.

This sequence belongs to the UbiA prenyltransferase family. The cofactor is Mg(2+).

The protein resides in the cell inner membrane. It carries out the reaction all-trans-octaprenyl diphosphate + 4-hydroxybenzoate = 4-hydroxy-3-(all-trans-octaprenyl)benzoate + diphosphate. The protein operates within cofactor biosynthesis; ubiquinone biosynthesis. Catalyzes the prenylation of para-hydroxybenzoate (PHB) with an all-trans polyprenyl group. Mediates the second step in the final reaction sequence of ubiquinone-8 (UQ-8) biosynthesis, which is the condensation of the polyisoprenoid side chain with PHB, generating the first membrane-bound Q intermediate 3-octaprenyl-4-hydroxybenzoate. The polypeptide is 4-hydroxybenzoate octaprenyltransferase (Alkalilimnicola ehrlichii (strain ATCC BAA-1101 / DSM 17681 / MLHE-1)).